The chain runs to 1031 residues: uncharacterized protein (1031 aa).

The SWIM-type zinc-finger motif lies at Phe50 to Asn85. Positions Arg590–Asn751 constitute a Helicase ATP-binding domain. Asp603 to Thr610 contributes to the ATP binding site. The short motif at Asp702–Gln705 is the DEAQ box element. The 155-residue stretch at Ala868–Ser1022 folds into the Helicase C-terminal domain.

Belongs to the SNF2/RAD54 helicase family.

This is an uncharacterized protein from Mycoplasma genitalium (strain ATCC 33530 / DSM 19775 / NCTC 10195 / G37) (Mycoplasmoides genitalium).